The following is a 58-amino-acid chain: Basic phospholipase A2 homolog PocTX (58 aa).

The cysteines at positions 29 and 45 are disulfide-linked.

As to expression, expressed by the venom gland.

It localises to the secreted. Wasp venom phospholipase A2 homolog that lacks enzymatic activity. This is Basic phospholipase A2 homolog PocTX from Polybia occidentalis (Paper wasp).